Reading from the N-terminus, the 238-residue chain is Zwei Ig domain protein zig-2 (238 aa).

The first 17 residues, 1 to 17, serve as a signal peptide directing secretion; the sequence is MLKFTAISFVLLNAAES. Residues 31–130 enclose the Ig-like C2-type 1 domain; the sequence is PLLKFTRTPN…NGLTKLEHVA (100 aa). N-linked (GlcNAc...) asparagine glycosylation is found at Asn-40 and Asn-43. Cys-54 and Cys-117 form a disulfide bridge. N-linked (GlcNAc...) asparagine glycosylation is found at Asn-137, Asn-206, and Asn-216. One can recognise an Ig-like C2-type 2 domain in the interval 149 to 230; that stretch reads PFISMTVDFR…NHFGETTAIT (82 aa). An intrachain disulfide couples Cys-170 to Cys-217.

Expressed in PVT neurons and weakly in some head neurons.

It localises to the secreted. Its function is as follows. Probably not involved in maintaining the position of ASI and ASH head neuron cell bodies and ventral nerve cord axons of PVQ, PVP, RMEV, AVK and HSN neurons. The sequence is that of Zwei Ig domain protein zig-2 from Caenorhabditis elegans.